A 1342-amino-acid chain; its full sequence is Putative aldehyde oxidase-like protein (1342 aa).

The tract at residues 1–23 is disordered; the sequence is MSDCNSGGGERRPNARATDAPPV. The 188-residue stretch at 221 to 408 folds into the FAD-binding PCMH-type domain; that stretch reads ISSPREGWYC…LSIFIPHWAS (188 aa).

It belongs to the xanthine dehydrogenase family.

This Oryza sativa subsp. japonica (Rice) protein is Putative aldehyde oxidase-like protein.